A 270-amino-acid polypeptide reads, in one-letter code: Tryptophan synthase alpha chain (270 aa).

Catalysis depends on proton acceptor residues Glu57 and Asp68.

The protein belongs to the TrpA family. Tetramer of two alpha and two beta chains.

The enzyme catalyses (1S,2R)-1-C-(indol-3-yl)glycerol 3-phosphate + L-serine = D-glyceraldehyde 3-phosphate + L-tryptophan + H2O. It participates in amino-acid biosynthesis; L-tryptophan biosynthesis; L-tryptophan from chorismate: step 5/5. Functionally, the alpha subunit is responsible for the aldol cleavage of indoleglycerol phosphate to indole and glyceraldehyde 3-phosphate. In Mycobacterium leprae (strain Br4923), this protein is Tryptophan synthase alpha chain.